A 349-amino-acid polypeptide reads, in one-letter code: Fe(3+) ions import ATP-binding protein FbpC (349 aa).

The region spanning 4–236 (LELHHIGKSY…PVDEPTATFL (233 aa)) is the ABC transporter domain. 36-43 (GPSGSGKT) provides a ligand contact to ATP.

The protein belongs to the ABC transporter superfamily. Fe(3+) ion importer (TC 3.A.1.10) family. In terms of assembly, the complex is composed of two ATP-binding proteins (FbpC), two transmembrane proteins (FbpB) and a solute-binding protein (FbpA).

The protein resides in the cell inner membrane. It catalyses the reaction Fe(3+)(out) + ATP + H2O = Fe(3+)(in) + ADP + phosphate + H(+). Part of the ABC transporter complex FbpABC involved in Fe(3+) ions import. Responsible for energy coupling to the transport system. This chain is Fe(3+) ions import ATP-binding protein FbpC, found in Yersinia pestis bv. Antiqua (strain Antiqua).